The following is a 186-amino-acid chain: TATA box-binding protein-like 1 (186 aa).

The protein belongs to the TBP family. In terms of assembly, binds TFIIA and TFIIB.

The protein resides in the cytoplasm. It is found in the nucleus. Part of a specialized transcription system that mediates the transcription of most ribosomal proteins through the 5'-TCT-3' motif which is a core promoter element at these genes. Seems to also mediate the transcription of NF1. Does not bind the TATA box. In Bos taurus (Bovine), this protein is TATA box-binding protein-like 1 (TBPL1).